Here is a 92-residue protein sequence, read N- to C-terminus: Small ribosomal subunit protein bS18A (92 aa).

Belongs to the bacterial ribosomal protein bS18 family. As to quaternary structure, part of the 30S ribosomal subunit. Forms a tight heterodimer with protein bS6.

Binds as a heterodimer with protein bS6 to the central domain of the 16S rRNA, where it helps stabilize the platform of the 30S subunit. The polypeptide is Small ribosomal subunit protein bS18A (Cupriavidus pinatubonensis (strain JMP 134 / LMG 1197) (Cupriavidus necator (strain JMP 134))).